The sequence spans 88 residues: Large ribosomal subunit protein bL31B (88 aa).

Belongs to the bacterial ribosomal protein bL31 family. Type B subfamily. As to quaternary structure, part of the 50S ribosomal subunit.

The polypeptide is Large ribosomal subunit protein bL31B (Corynebacterium efficiens (strain DSM 44549 / YS-314 / AJ 12310 / JCM 11189 / NBRC 100395)).